A 921-amino-acid chain; its full sequence is GPI ethanolamine phosphate transferase 1 (921 aa).

The chain crosses the membrane as a helical span at residues 37–57 (PGHVALIAGLYEDVSAVTTGW). N-linked (GlcNAc...) asparagine glycans are attached at residues Asn69 and Asn132. The next 10 membrane-spanning stretches (helical) occupy residues 386-406 (ALIT…VIDL), 418-438 (TLIG…SFAI), 441-461 (SPLT…EVYA), 483-503 (FVSL…LALG), 509-529 (ILTI…FSFL), 533-553 (MALS…TLLP), 561-581 (VNMI…YLIL), 606-626 (LVGI…SSAL), 640-660 (VMGW…RAKP), and 679-699 (FVIL…AVLV). The segment at 715–737 (SANGAARSAPSPAKPHNLETSQT) is disordered. Transmembrane regions (helical) follow at residues 752–772 (VALF…NVAS), 795–815 (AMLI…LGIL), 825–845 (ALFM…FWVV), and 862–882 (VIAS…AMFI).

This sequence belongs to the PIGG/PIGN/PIGO family. PIGN subfamily.

The protein resides in the endoplasmic reticulum membrane. It participates in glycolipid biosynthesis; glycosylphosphatidylinositol-anchor biosynthesis. In terms of biological role, ethanolamine phosphate transferase involved in glycosylphosphatidylinositol-anchor biosynthesis. Transfers ethanolamine phosphate to the first alpha-1,4-linked mannose of the glycosylphosphatidylinositol precursor of GPI-anchor. The sequence is that of GPI ethanolamine phosphate transferase 1 (MCD4) from Chaetomium globosum (strain ATCC 6205 / CBS 148.51 / DSM 1962 / NBRC 6347 / NRRL 1970) (Soil fungus).